We begin with the raw amino-acid sequence, 201 residues long: Casparian strip membrane protein 4 (201 aa).

Residues 1-23 (MEGKAAVTTSTEHGDGEASRTAA) form a disordered region. The Cytoplasmic portion of the chain corresponds to 1–41 (MEGKAAVTTSTEHGDGEASRTAARTVVSGSSRGGAASRALS). The helical transmembrane segment at 42–62 (VADLILRVVAVVAIVDSAIAM) threads the bilayer. The Extracellular portion of the chain corresponds to 63-87 (GTTNQTLPFFTQFLRFKAQYSDLPT). N-linked (GlcNAc...) asparagine glycosylation occurs at Asn66. A helical membrane pass occupies residues 88 to 108 (LTLFVVANSAVTAYLVLSIPL). The Cytoplasmic portion of the chain corresponds to 109-122 (SVVHIIRSRASYSR). Residues 123 to 143 (LVLIFLDSVMLALVAAVASAS) form a helical membrane-spanning segment. Over 144-172 (AAIVYLAHKGNVRANWFAVCQQFDSFCER) the chain is Extracellular. The chain crosses the membrane as a helical span at residues 173 to 193 (ISGPLIGSFAAMAVLLLLVLL). Topologically, residues 194–201 (SAAALARR) are cytoplasmic.

Belongs to the Casparian strip membrane proteins (CASP) family. As to quaternary structure, homodimer and heterodimers.

It localises to the cell membrane. In terms of biological role, regulates membrane-cell wall junctions and localized cell wall deposition. Required for establishment of the Casparian strip membrane domain (CSD) and the subsequent formation of Casparian strips, a cell wall modification of the root endodermis that determines an apoplastic barrier between the intraorganismal apoplasm and the extraorganismal apoplasm and prevents lateral diffusion. The chain is Casparian strip membrane protein 4 from Oryza sativa subsp. japonica (Rice).